Here is a 117-residue protein sequence, read N- to C-terminus: Large ribosomal subunit protein bL20 (117 aa).

This sequence belongs to the bacterial ribosomal protein bL20 family.

In terms of biological role, binds directly to 23S ribosomal RNA and is necessary for the in vitro assembly process of the 50S ribosomal subunit. It is not involved in the protein synthesizing functions of that subunit. The sequence is that of Large ribosomal subunit protein bL20 from Pasteurella multocida (strain Pm70).